The sequence spans 265 residues: Undecaprenyl-diphosphatase (265 aa).

The next 8 helical transmembrane spans lie at 1–21 (MDFL…FLPI), 39–59 (QGVG…ILYF), 87–107 (WAVV…LDYI), 110–130 (ALRA…LLAA), 144–164 (IGFK…IPGT), 187–207 (FSFF…LLTI), 217–237 (LGFL…IHFF), and 244–264 (FGMW…YLLF).

It belongs to the UppP family.

It is found in the cell inner membrane. It carries out the reaction di-trans,octa-cis-undecaprenyl diphosphate + H2O = di-trans,octa-cis-undecaprenyl phosphate + phosphate + H(+). In terms of biological role, catalyzes the dephosphorylation of undecaprenyl diphosphate (UPP). Confers resistance to bacitracin. This Idiomarina loihiensis (strain ATCC BAA-735 / DSM 15497 / L2-TR) protein is Undecaprenyl-diphosphatase.